Reading from the N-terminus, the 547-residue chain is Serine/threonine-protein kinase RIO2 (547 aa).

The 177-residue stretch at 97 to 273 (VGNQMGVGKE…RDVKCIREFF (177 aa)) folds into the Protein kinase domain. Lys123 serves as a coordination point for ATP. Asp228 serves as the catalytic Proton acceptor. Phosphoserine is present on residues Ser332, Ser337, Ser350, Ser362, Ser385, and Ser390. The disordered stretch occupies residues 352–385 (LEKEADPADESGGSWCCSSTDSKQIKDGGLPEES). Positions 399-408 (AVEEMERQVL) match the Nuclear export signal motif. Residues 404-445 (ERQVLPHRSVTEFSEESRRTENDGQPGQRSPAGSEDCDDEPP) are disordered. Ser412, Ser417, Ser433, Ser437, and Ser543 each carry phosphoserine.

The protein belongs to the protein kinase superfamily. RIO-type Ser/Thr kinase family. In terms of assembly, associated with late 40S pre-ribosomal particles. Interacts with PLK1 (via its N-terminus). Requires Mg(2+) as cofactor. Autophosphorylated (in vitro). Phosphorylation affects the timing of the metaphase-anaphase transition.

It localises to the cytoplasm. It carries out the reaction L-seryl-[protein] + ATP = O-phospho-L-seryl-[protein] + ADP + H(+). It catalyses the reaction L-threonyl-[protein] + ATP = O-phospho-L-threonyl-[protein] + ADP + H(+). Serine/threonine-protein kinase involved in the final steps of cytoplasmic maturation of the 40S ribosomal subunit. Involved in export of the 40S pre-ribosome particles (pre-40S) from the nucleus to the cytoplasm. Its kinase activity is required for the release of NOB1, PNO1 and LTV1 from the late pre-40S and the processing of 18S-E pre-rRNA to the mature 18S rRNA. May regulate the timing of the metaphase-anaphase transition during mitotic progression, and its phosphorylation, may regulate this function. The polypeptide is Serine/threonine-protein kinase RIO2 (Riok2) (Mus musculus (Mouse)).